The sequence spans 512 residues: tRNA-guanine(15) transglycosylase (512 aa).

Catalysis depends on Asp85, which acts as the Nucleophile. Asp120 serves as a coordination point for substrate. Positions 272, 274, and 277 each coordinate Zn(2+).

Belongs to the archaeosine tRNA-ribosyltransferase family. The cofactor is Zn(2+).

It catalyses the reaction guanosine(15) in tRNA + 7-cyano-7-deazaguanine = 7-cyano-7-carbaguanosine(15) in tRNA + guanine. It participates in tRNA modification; archaeosine-tRNA biosynthesis. In terms of biological role, exchanges the guanine residue with 7-cyano-7-deazaguanine (preQ0) at position 15 in the dihydrouridine loop (D-loop) of archaeal tRNAs. The sequence is that of tRNA-guanine(15) transglycosylase from Aeropyrum pernix (strain ATCC 700893 / DSM 11879 / JCM 9820 / NBRC 100138 / K1).